We begin with the raw amino-acid sequence, 169 residues long: Allophycocyanin subunit beta-18 (169 aa).

Asn72 carries the post-translational modification N4-methylasparagine. Cys82 contributes to the (2R,3E)-phycocyanobilin binding site.

It belongs to the phycobiliprotein family. In terms of assembly, heterodimer of an alpha and a beta chain. Contains one covalently linked bilin chromophore.

The protein resides in the plastid. Its subcellular location is the chloroplast thylakoid membrane. In terms of biological role, light-harvesting photosynthetic bile pigment-protein from the phycobiliprotein complex. Allophycocyanin has a maximum absorption at approximately 650 nanometers. The chain is Allophycocyanin subunit beta-18 (apcF) from Porphyra purpurea (Red seaweed).